Reading from the N-terminus, the 123-residue chain is Transmembrane protein 254 (123 aa).

Helical transmembrane passes span 15–35 (LFWFTVITVSFGYYTWAVFWP), 63–83 (NGYWLAWLIHVGESLYALVLC), and 95–115 (LLWFLQTFLFGVASLSILIAY).

The protein resides in the membrane. In Mus musculus (Mouse), this protein is Transmembrane protein 254.